The chain runs to 356 residues: sn-glycerol-3-phosphate import ATP-binding protein UgpC (356 aa).

Residues L4 to I235 form the ABC transporter domain. G37–S44 lines the ATP pocket.

This sequence belongs to the ABC transporter superfamily. sn-glycerol-3-phosphate importer (TC 3.A.1.1.3) family. As to quaternary structure, the complex is composed of two ATP-binding proteins (UgpC), two transmembrane proteins (UgpA and UgpE) and a solute-binding protein (UgpB).

Its subcellular location is the cell inner membrane. The enzyme catalyses sn-glycerol 3-phosphate(out) + ATP + H2O = sn-glycerol 3-phosphate(in) + ADP + phosphate + H(+). Functionally, part of the ABC transporter complex UgpBAEC involved in sn-glycerol-3-phosphate (G3P) import. Responsible for energy coupling to the transport system. The polypeptide is sn-glycerol-3-phosphate import ATP-binding protein UgpC (Escherichia coli (strain UTI89 / UPEC)).